Here is a 179-residue protein sequence, read N- to C-terminus: 6,7-dimethyl-8-ribityllumazine synthase (179 aa).

5-amino-6-(D-ribitylamino)uracil contacts are provided by residues W13, 45 to 47 (AVE), and 68 to 70 (VVI). 73 to 74 (DT) is a binding site for (2S)-2-hydroxy-3-oxobutyl phosphate. The active-site Proton donor is H76. F101 is a 5-amino-6-(D-ribitylamino)uracil binding site. R115 lines the (2S)-2-hydroxy-3-oxobutyl phosphate pocket. Residues 157-179 (AKAAKKPAKAAAKTQKKKKKVRK) form a disordered region.

The protein belongs to the DMRL synthase family.

It catalyses the reaction (2S)-2-hydroxy-3-oxobutyl phosphate + 5-amino-6-(D-ribitylamino)uracil = 6,7-dimethyl-8-(1-D-ribityl)lumazine + phosphate + 2 H2O + H(+). It participates in cofactor biosynthesis; riboflavin biosynthesis; riboflavin from 2-hydroxy-3-oxobutyl phosphate and 5-amino-6-(D-ribitylamino)uracil: step 1/2. Functionally, catalyzes the formation of 6,7-dimethyl-8-ribityllumazine by condensation of 5-amino-6-(D-ribitylamino)uracil with 3,4-dihydroxy-2-butanone 4-phosphate. This is the penultimate step in the biosynthesis of riboflavin. This chain is 6,7-dimethyl-8-ribityllumazine synthase, found in Bdellovibrio bacteriovorus (strain ATCC 15356 / DSM 50701 / NCIMB 9529 / HD100).